A 1284-amino-acid polypeptide reads, in one-letter code: DNA-directed RNA polymerase subunit beta (1284 aa).

It belongs to the RNA polymerase beta chain family. The RNAP catalytic core consists of 2 alpha, 1 beta, 1 beta' and 1 omega subunit. When a sigma factor is associated with the core the holoenzyme is formed, which can initiate transcription.

It catalyses the reaction RNA(n) + a ribonucleoside 5'-triphosphate = RNA(n+1) + diphosphate. In terms of biological role, DNA-dependent RNA polymerase catalyzes the transcription of DNA into RNA using the four ribonucleoside triphosphates as substrates. The chain is DNA-directed RNA polymerase subunit beta from Mesoplasma florum (strain ATCC 33453 / NBRC 100688 / NCTC 11704 / L1) (Acholeplasma florum).